A 465-amino-acid polypeptide reads, in one-letter code: MELAAEEGFDIEDVEGAIEEAGHGPLPVLAVVGRPNVGKSTLVNRIIGRREAVVEDKPGVTRDRVTYEAEWAGRRFKVVDTGGWEQDVLGIDASVAAQAEYAIEAADAVVFVVDAKVGATDTDEAVVRLLRKAGKPVVLCANKVDGPSGEADASYLWSLGLGEPQPVSALHGRGTGDMLDRVLEALPEAPAQTFGTAVGGPRRIALIGRPNVGKSSLLNKVAGEDRVVVNELAGTTRDPVDELIELGGVTWKFVDTAGIRKRVHLQQGADYYASLRTAAAVEKAEVAVILVDASESISVQDQRIVTMAVEAGRAIVVAYNKWDTLDEERRYYLEREIETELGQVAWAPRVNVSAQTGRHMEKLVPAIETALAGWETRVPTGRLNAFLGELAAAHPHPVRGGKQPRILFGTQAGTKPPRFVLFASGFIEAGYRRFIERRLREEFGFEGTPIHISVRVREKRGAKKK.

2 EngA-type G domains span residues 27 to 190 (PVLA…PEAP) and 202 to 375 (RRIA…AGWE). GTP-binding positions include 33-40 (GRPNVGKS), 80-84 (DTGGW), 142-145 (NKVD), 208-215 (GRPNVGKS), 255-259 (DTAGI), and 320-323 (NKWD). Positions 376 to 458 (TRVPTGRLNA…PIHISVRVRE (83 aa)) constitute a KH-like domain.

The protein belongs to the TRAFAC class TrmE-Era-EngA-EngB-Septin-like GTPase superfamily. EngA (Der) GTPase family. In terms of assembly, associates with the 50S ribosomal subunit.

In terms of biological role, GTPase that plays an essential role in the late steps of ribosome biogenesis. The chain is GTPase Der from Streptomyces coelicolor (strain ATCC BAA-471 / A3(2) / M145).